We begin with the raw amino-acid sequence, 681 residues long: Potassium-transporting ATPase ATP-binding subunit (681 aa).

Helical transmembrane passes span 30-50 (LLVYVGAILATSLYFLGFFGI), 59-79 (LAIALILWFTVLFANFAEAIA), 216-236 (ILLVTLSIIFLAVSATLLPFT), and 255-275 (IALLVCLAPTTIGALLSSIGI). Asp-306 (4-aspartylphosphate intermediate) is an active-site residue. ATP is bound by residues Asp-343, Glu-347, 376–383 (FTATTRMS), and Lys-394. Mg(2+) is bound by residues Asp-517 and Asp-521. The next 3 membrane-spanning stretches (helical) occupy residues 587–607 (FAIIPVLFYGIFPQLEALNLM), 615–635 (AILSAIIYNALIIIFLIPLSL), and 661–681 (LVAPFIAIKLIDMLLTVLGIV).

This sequence belongs to the cation transport ATPase (P-type) (TC 3.A.3) family. Type IA subfamily. In terms of assembly, the system is composed of three essential subunits: KdpA, KdpB and KdpC.

The protein localises to the cell membrane. It catalyses the reaction K(+)(out) + ATP + H2O = K(+)(in) + ADP + phosphate + H(+). Part of the high-affinity ATP-driven potassium transport (or Kdp) system, which catalyzes the hydrolysis of ATP coupled with the electrogenic transport of potassium into the cytoplasm. This subunit is responsible for energy coupling to the transport system and for the release of the potassium ions to the cytoplasm. The polypeptide is Potassium-transporting ATPase ATP-binding subunit (Listeria welshimeri serovar 6b (strain ATCC 35897 / DSM 20650 / CCUG 15529 / CIP 8149 / NCTC 11857 / SLCC 5334 / V8)).